The primary structure comprises 156 residues: Putative F-box protein R637 (156 aa).

Residues 4–51 (HISSLLNEDCVRHIMCFLTDKEKGKFCLTCRDLLYLIKDVKFNDPVNK) form the F-box domain.

This is Putative F-box protein R637 from Acanthamoeba polyphaga mimivirus (APMV).